An 89-amino-acid polypeptide reads, in one-letter code: Small ribosomal subunit protein bS16 (89 aa).

This sequence belongs to the bacterial ribosomal protein bS16 family.

This is Small ribosomal subunit protein bS16 from Psychrobacter arcticus (strain DSM 17307 / VKM B-2377 / 273-4).